Reading from the N-terminus, the 281-residue chain is NADPH-dependent 7-cyano-7-deazaguanine reductase (281 aa).

81 to 83 provides a ligand contact to substrate; the sequence is VES. 83–84 serves as a coordination point for NADPH; it reads SK. C188 functions as the Thioimide intermediate in the catalytic mechanism. D195 serves as the catalytic Proton donor. 227–228 contributes to the substrate binding site; it reads HE. NADPH is bound at residue 256–257; the sequence is RG. The interval 261-281 is disordered; the sequence is INPLRTSHPQGLPRNMRTARQ.

It belongs to the GTP cyclohydrolase I family. QueF type 2 subfamily. Homodimer.

It is found in the cytoplasm. It catalyses the reaction 7-aminomethyl-7-carbaguanine + 2 NADP(+) = 7-cyano-7-deazaguanine + 2 NADPH + 3 H(+). Its pathway is tRNA modification; tRNA-queuosine biosynthesis. Its function is as follows. Catalyzes the NADPH-dependent reduction of 7-cyano-7-deazaguanine (preQ0) to 7-aminomethyl-7-deazaguanine (preQ1). The sequence is that of NADPH-dependent 7-cyano-7-deazaguanine reductase from Verminephrobacter eiseniae (strain EF01-2).